The sequence spans 84 residues: Cell division topological specificity factor (84 aa).

The protein belongs to the MinE family.

Functionally, prevents the cell division inhibition by proteins MinC and MinD at internal division sites while permitting inhibition at polar sites. This ensures cell division at the proper site by restricting the formation of a division septum at the midpoint of the long axis of the cell. The sequence is that of Cell division topological specificity factor from Pseudomonas fluorescens (strain Pf0-1).